A 131-amino-acid polypeptide reads, in one-letter code: Small ribosomal subunit protein uS8 (131 aa).

It belongs to the universal ribosomal protein uS8 family. In terms of assembly, part of the 30S ribosomal subunit. Contacts proteins S5 and S12.

In terms of biological role, one of the primary rRNA binding proteins, it binds directly to 16S rRNA central domain where it helps coordinate assembly of the platform of the 30S subunit. The protein is Small ribosomal subunit protein uS8 of Halorhodospira halophila (strain DSM 244 / SL1) (Ectothiorhodospira halophila (strain DSM 244 / SL1)).